We begin with the raw amino-acid sequence, 123 residues long: Small ribosomal subunit protein uS12 (123 aa).

Positions 1–32 (MPTIQQLVRKGRTDKISKNKTPALKGSPQRRG) are disordered. Aspartate 89 carries the 3-methylthioaspartic acid modification. The interval 103 to 123 (DTQGVKGRKQARSRYGAKKEK) is disordered. Residues 108–123 (KGRKQARSRYGAKKEK) show a composition bias toward basic residues.

It belongs to the universal ribosomal protein uS12 family. Part of the 30S ribosomal subunit. Contacts proteins S8 and S17. May interact with IF1 in the 30S initiation complex.

Functionally, with S4 and S5 plays an important role in translational accuracy. Interacts with and stabilizes bases of the 16S rRNA that are involved in tRNA selection in the A site and with the mRNA backbone. Located at the interface of the 30S and 50S subunits, it traverses the body of the 30S subunit contacting proteins on the other side and probably holding the rRNA structure together. The combined cluster of proteins S8, S12 and S17 appears to hold together the shoulder and platform of the 30S subunit. This chain is Small ribosomal subunit protein uS12, found in Cutibacterium acnes (strain DSM 16379 / KPA171202) (Propionibacterium acnes).